Here is a 363-residue protein sequence, read N- to C-terminus: 3-isopropylmalate dehydrogenase (363 aa).

Residue 77–90 participates in NAD(+) binding; that stretch reads GPKWQHLPPDQQPE. Residues R98, R108, R137, and D226 each coordinate substrate. 3 residues coordinate Mg(2+): D226, D250, and D254. Position 284-296 (284-296) interacts with NAD(+); it reads GSAPDIAGKNIAN.

This sequence belongs to the isocitrate and isopropylmalate dehydrogenases family. LeuB type 1 subfamily. Homodimer. Requires Mg(2+) as cofactor. Mn(2+) is required as a cofactor.

The protein resides in the cytoplasm. The catalysed reaction is (2R,3S)-3-isopropylmalate + NAD(+) = 4-methyl-2-oxopentanoate + CO2 + NADH. Its pathway is amino-acid biosynthesis; L-leucine biosynthesis; L-leucine from 3-methyl-2-oxobutanoate: step 3/4. Functionally, catalyzes the oxidation of 3-carboxy-2-hydroxy-4-methylpentanoate (3-isopropylmalate) to 3-carboxy-4-methyl-2-oxopentanoate. The product decarboxylates to 4-methyl-2 oxopentanoate. The protein is 3-isopropylmalate dehydrogenase of Buchnera aphidicola subsp. Pemphigus spyrothecae.